The chain runs to 601 residues: Transcription factor ATEG_07666 (601 aa).

A DNA-binding region (zn(2)-C6 fungal-type) is located at residues 17-44; sequence CEECRRRKARCDRVRPKCGFCTENGMQC.

It is found in the nucleus. Specific transcriptional regulator for the azasperpyranone A biosynthesis cluster B. The sequence is that of Transcription factor ATEG_07666 from Aspergillus terreus (strain NIH 2624 / FGSC A1156).